The sequence spans 492 residues: Differentially expressed in FDCP 8 homolog (492 aa).

Positions 38 to 51 are enriched in gly residues; the sequence is GLGGSGSTGSGSEA. The tract at residues 38-62 is disordered; that stretch reads GLGGSGSTGSGSEAGGSEESGPQGA. 2 Phorbol-ester/DAG-type zinc fingers span residues 161–214 and 400–453; these read PHHG…KRVC and DHIR…NMIC. The interval 468–492 is disordered; it reads RMKSTEDDDDDDDGVATDDDVTAAE. Residues 473-492 show a composition bias toward acidic residues; it reads EDDDDDDDGVATDDDVTAAE.

The protein belongs to the DEF8 family.

This chain is Differentially expressed in FDCP 8 homolog, found in Drosophila melanogaster (Fruit fly).